A 294-amino-acid polypeptide reads, in one-letter code: UDP-3-O-acyl-N-acetylglucosamine deacetylase (294 aa).

Zn(2+) contacts are provided by His75, His232, and Asp236. Residue His259 is the Proton donor of the active site.

Belongs to the LpxC family. Zn(2+) serves as cofactor.

The enzyme catalyses a UDP-3-O-[(3R)-3-hydroxyacyl]-N-acetyl-alpha-D-glucosamine + H2O = a UDP-3-O-[(3R)-3-hydroxyacyl]-alpha-D-glucosamine + acetate. It functions in the pathway glycolipid biosynthesis; lipid IV(A) biosynthesis; lipid IV(A) from (3R)-3-hydroxytetradecanoyl-[acyl-carrier-protein] and UDP-N-acetyl-alpha-D-glucosamine: step 2/6. Functionally, catalyzes the hydrolysis of UDP-3-O-myristoyl-N-acetylglucosamine to form UDP-3-O-myristoylglucosamine and acetate, the committed step in lipid A biosynthesis. This Campylobacter curvus (strain 525.92) protein is UDP-3-O-acyl-N-acetylglucosamine deacetylase.